Consider the following 288-residue polypeptide: 33 kDa chaperonin (288 aa).

2 cysteine pairs are disulfide-bonded: cysteine 235/cysteine 237 and cysteine 268/cysteine 271.

The protein belongs to the HSP33 family. Post-translationally, under oxidizing conditions two disulfide bonds are formed involving the reactive cysteines. Under reducing conditions zinc is bound to the reactive cysteines and the protein is inactive.

The protein localises to the cytoplasm. Functionally, redox regulated molecular chaperone. Protects both thermally unfolding and oxidatively damaged proteins from irreversible aggregation. Plays an important role in the bacterial defense system toward oxidative stress. This Streptococcus thermophilus (strain ATCC BAA-491 / LMD-9) protein is 33 kDa chaperonin.